Reading from the N-terminus, the 199-residue chain is FMN-dependent NADH:quinone oxidoreductase 4 (199 aa).

FMN is bound by residues S10, 95–98 (MYNL), and 139–142 (SRGG).

It belongs to the azoreductase type 1 family. Homodimer. It depends on FMN as a cofactor.

It carries out the reaction 2 a quinone + NADH + H(+) = 2 a 1,4-benzosemiquinone + NAD(+). The catalysed reaction is N,N-dimethyl-1,4-phenylenediamine + anthranilate + 2 NAD(+) = 2-(4-dimethylaminophenyl)diazenylbenzoate + 2 NADH + 2 H(+). In terms of biological role, quinone reductase that provides resistance to thiol-specific stress caused by electrophilic quinones. Functionally, also exhibits azoreductase activity. Catalyzes the reductive cleavage of the azo bond in aromatic azo compounds to the corresponding amines. This is FMN-dependent NADH:quinone oxidoreductase 4 from Burkholderia lata (strain ATCC 17760 / DSM 23089 / LMG 22485 / NCIMB 9086 / R18194 / 383).